The chain runs to 202 residues: D-alanyl-D-alanine dipeptidase (202 aa).

The Zn(2+) site is built by H116 and D123. E181 serves as the catalytic Proton donor/acceptor. Residue H184 participates in Zn(2+) binding.

This sequence belongs to the peptidase M15D family. Homodimer. Requires Zn(2+) as cofactor. Fe(2+) is required as a cofactor. The cofactor is Co(2+). Ni(2+) serves as cofactor.

It carries out the reaction D-alanyl-D-alanine + H2O = 2 D-alanine. With respect to regulation, inhibited by aminoalkyl phosphinate analogs. Catalyzes hydrolysis of the D-alanyl-D-alanine dipeptide. This is D-alanyl-D-alanine dipeptidase (vanX) from Enterococcus faecium (Streptococcus faecium).